We begin with the raw amino-acid sequence, 319 residues long: tRNA U34 carboxymethyltransferase (319 aa).

Carboxy-S-adenosyl-L-methionine-binding positions include K88, W102, K107, G126, L176–E177, M192, Y196, and R311.

Belongs to the class I-like SAM-binding methyltransferase superfamily. CmoB family. As to quaternary structure, homotetramer.

The enzyme catalyses carboxy-S-adenosyl-L-methionine + 5-hydroxyuridine(34) in tRNA = 5-carboxymethoxyuridine(34) in tRNA + S-adenosyl-L-homocysteine + H(+). Functionally, catalyzes carboxymethyl transfer from carboxy-S-adenosyl-L-methionine (Cx-SAM) to 5-hydroxyuridine (ho5U) to form 5-carboxymethoxyuridine (cmo5U) at position 34 in tRNAs. The sequence is that of tRNA U34 carboxymethyltransferase from Azotobacter vinelandii (strain DJ / ATCC BAA-1303).